Here is a 236-residue protein sequence, read N- to C-terminus: Small ribosomal subunit protein uS2c (236 aa).

Belongs to the universal ribosomal protein uS2 family.

The protein resides in the plastid. It is found in the chloroplast. This Oenothera parviflora (Small-flowered evening primrose) protein is Small ribosomal subunit protein uS2c (rps2).